Reading from the N-terminus, the 133-residue chain is uncharacterized protein (133 aa).

The protein belongs to the ycf68 family.

The protein resides in the plastid. It is found in the chloroplast. This is an uncharacterized protein from Oryza sativa subsp. japonica (Rice).